We begin with the raw amino-acid sequence, 604 residues long: Threonine--tRNA ligase (604 aa).

The segment at 209 to 500 (DHRKLGQEMG…LTEHFGGEFP (292 aa)) is catalytic. The Zn(2+) site is built by Cys301, His352, and His477.

This sequence belongs to the class-II aminoacyl-tRNA synthetase family. Homodimer. The cofactor is Zn(2+).

The protein resides in the cytoplasm. The enzyme catalyses tRNA(Thr) + L-threonine + ATP = L-threonyl-tRNA(Thr) + AMP + diphosphate + H(+). In terms of biological role, catalyzes the attachment of threonine to tRNA(Thr) in a two-step reaction: L-threonine is first activated by ATP to form Thr-AMP and then transferred to the acceptor end of tRNA(Thr). Also edits incorrectly charged L-seryl-tRNA(Thr). The sequence is that of Threonine--tRNA ligase from Helicobacter hepaticus (strain ATCC 51449 / 3B1).